We begin with the raw amino-acid sequence, 353 residues long: Anthranilate phosphoribosyltransferase (353 aa).

5-phospho-alpha-D-ribose 1-diphosphate is bound by residues glycine 86, 89–90 (GD), 96–99 (NVST), 114–122 (KHGNRAVSG), and serine 126. Residue glycine 86 participates in anthranilate binding. Serine 98 lines the Mg(2+) pocket. Asparagine 117 serves as a coordination point for anthranilate. Arginine 172 is an anthranilate binding site. Positions 231 and 232 each coordinate Mg(2+).

It belongs to the anthranilate phosphoribosyltransferase family. Homodimer. Mg(2+) is required as a cofactor.

It catalyses the reaction N-(5-phospho-beta-D-ribosyl)anthranilate + diphosphate = 5-phospho-alpha-D-ribose 1-diphosphate + anthranilate. Its pathway is amino-acid biosynthesis; L-tryptophan biosynthesis; L-tryptophan from chorismate: step 2/5. Its function is as follows. Catalyzes the transfer of the phosphoribosyl group of 5-phosphorylribose-1-pyrophosphate (PRPP) to anthranilate to yield N-(5'-phosphoribosyl)-anthranilate (PRA). The sequence is that of Anthranilate phosphoribosyltransferase from Pseudomonas syringae pv. syringae (strain B728a).